A 238-amino-acid chain; its full sequence is Uridylate kinase (238 aa).

Residue 11-14 (KLSG) coordinates ATP. G52 contributes to the UMP binding site. 2 residues coordinate ATP: G53 and R57. Residues D72 and 134–141 (TGFSYFTT) contribute to the UMP site. Residues N162, Y168, and D171 each coordinate ATP.

Belongs to the UMP kinase family. Homohexamer.

The protein localises to the cytoplasm. It catalyses the reaction UMP + ATP = UDP + ADP. It participates in pyrimidine metabolism; CTP biosynthesis via de novo pathway; UDP from UMP (UMPK route): step 1/1. Inhibited by UTP. Catalyzes the reversible phosphorylation of UMP to UDP. The polypeptide is Uridylate kinase (Mesoplasma florum (strain ATCC 33453 / NBRC 100688 / NCTC 11704 / L1) (Acholeplasma florum)).